The following is a 374-amino-acid chain: Queuine tRNA-ribosyltransferase (374 aa).

D89 functions as the Proton acceptor in the catalytic mechanism. Residues 89–93 (DSGGF), D143, Q187, and G214 each bind substrate. Residues 245–251 (GVGKPED) form an RNA binding region. Catalysis depends on D264, which acts as the Nucleophile. The tract at residues 269 to 273 (TRNAR) is RNA binding; important for wobble base 34 recognition. 4 residues coordinate Zn(2+): C302, C304, C307, and H333.

The protein belongs to the queuine tRNA-ribosyltransferase family. As to quaternary structure, homodimer. Within each dimer, one monomer is responsible for RNA recognition and catalysis, while the other monomer binds to the replacement base PreQ1. The cofactor is Zn(2+).

It catalyses the reaction 7-aminomethyl-7-carbaguanine + guanosine(34) in tRNA = 7-aminomethyl-7-carbaguanosine(34) in tRNA + guanine. It participates in tRNA modification; tRNA-queuosine biosynthesis. In terms of biological role, catalyzes the base-exchange of a guanine (G) residue with the queuine precursor 7-aminomethyl-7-deazaguanine (PreQ1) at position 34 (anticodon wobble position) in tRNAs with GU(N) anticodons (tRNA-Asp, -Asn, -His and -Tyr). Catalysis occurs through a double-displacement mechanism. The nucleophile active site attacks the C1' of nucleotide 34 to detach the guanine base from the RNA, forming a covalent enzyme-RNA intermediate. The proton acceptor active site deprotonates the incoming PreQ1, allowing a nucleophilic attack on the C1' of the ribose to form the product. After dissociation, two additional enzymatic reactions on the tRNA convert PreQ1 to queuine (Q), resulting in the hypermodified nucleoside queuosine (7-(((4,5-cis-dihydroxy-2-cyclopenten-1-yl)amino)methyl)-7-deazaguanosine). In Shewanella baltica (strain OS223), this protein is Queuine tRNA-ribosyltransferase.